Reading from the N-terminus, the 863-residue chain is DNA replication licensing factor mcm4 (863 aa).

The disordered stretch occupies residues 1 to 121 (MSSPTSTPSR…ARQRPDLGSA (121 aa)). Polar residues-rich tracts occupy residues 54-64 (SPSGDLQSPSG) and 78-99 (SALQ…SSRV). Residues 306 to 331 (CQVCAFTTRVEIDRGRISEPSVCKHC) form a C4-type zinc finger. The MCM domain maps to 458 to 667 (IYERLASALA…YDRRLAHHLV (210 aa)). Residues Y471, R497, K516, S517, N618, R643, R732, and E735 each contribute to the ATP site. Residues 642 to 645 (SRFD) carry the Arginine finger motif.

The protein belongs to the MCM family. As to quaternary structure, component of the mcm2-7 complex (RLF-M). The complex forms a toroidal hexameric ring with the proposed subunit order mcm2-mcm6-mcm4-mcm7-mcm3-mcm5. The heterodimer of mmcm3/mcm5 interacts with mcm4, mmcm6, mcm7 and weakly with mcm2. Component of the CMG helicase complex, composed of the mcm2-7 complex, the GINS complex and cdc45. Post-translationally, hyperphosphorylated during mitosis in a mechanism requiring cdc2-cyclin B and other kinases. Undergoes dephosphorylation after exiting mitosis, existing in a partially phosphorylated state in the cytosolic interphase mcm complex which associates with the pre-replication complexes (pre-Rcs). Complete dephosphorylation inactivates the mcm complex, preventing its binding to chromatin. Becomes actively phosphorylated during S phase once the mcm complex is assembled on the chromatin. This chromatin-associated phosphorylation occurs during the activation of the pre-Rcs and is independent of cdks. Phosphorylated by the cdc7-dbf4b complex.

Its subcellular location is the nucleus. The protein localises to the chromosome. The catalysed reaction is ATP + H2O = ADP + phosphate + H(+). Its function is as follows. Acts as a component of the MCM2-7 complex (MCM complex) which is the replicative helicase essential for 'once per cell cycle' DNA replication initiation and elongation in eukaryotic cells. Core component of CDC45-MCM-GINS (CMG) helicase, the molecular machine that unwinds template DNA during replication, and around which the replisome is built. The active ATPase sites in the MCM2-7 ring are formed through the interaction surfaces of two neighboring subunits such that a critical structure of a conserved arginine finger motif is provided in trans relative to the ATP-binding site of the Walker A box of the adjacent subunit. The six ATPase active sites, however, are likely to contribute differentially to the complex helicase activity. This is DNA replication licensing factor mcm4 from Xenopus tropicalis (Western clawed frog).